We begin with the raw amino-acid sequence, 587 residues long: Folylpolyglutamate synthase, mitochondrial (587 aa).

A mitochondrion-targeting transit peptide spans 1-42; the sequence is MSWARTHLRSALSLAAVSARGATTEGAARRWLSAWPAPQEPG. 106–109 lines the ATP pocket; that stretch reads GKGS. Mg(2+) is bound by residues serine 130, glutamate 200, and histidine 228. Residues arginine 363 and aspartate 377 each coordinate ATP. The segment at 484 to 508 is disordered; it reads PDFLSSPSPEPGRPGSLQPALRPPH. Serine 539 carries the phosphoserine modification.

The protein belongs to the folylpolyglutamate synthase family. In terms of assembly, monomer. It depends on a monovalent cation as a cofactor.

The protein resides in the mitochondrion inner membrane. It localises to the mitochondrion matrix. The protein localises to the cytoplasm. It carries out the reaction (6S)-5,6,7,8-tetrahydrofolyl-(gamma-L-Glu)(n) + L-glutamate + ATP = (6S)-5,6,7,8-tetrahydrofolyl-(gamma-L-Glu)(n+1) + ADP + phosphate + H(+). It participates in cofactor biosynthesis; tetrahydrofolylpolyglutamate biosynthesis. In terms of biological role, catalyzes conversion of folates to polyglutamate derivatives allowing concentration of folate compounds in the cell and the intracellular retention of these cofactors, which are important substrates for most of the folate-dependent enzymes that are involved in one-carbon transfer reactions involved in purine, pyrimidine and amino acid synthesis. The protein is Folylpolyglutamate synthase, mitochondrial (FPGS) of Cricetulus griseus (Chinese hamster).